Reading from the N-terminus, the 1244-residue chain is Structural polyprotein (1244 aa).

A disordered region spans residues 1–113 (MNSVFYNPFG…GKRQRTALKF (113 aa)). Residues 35 to 44 (GLTTQIQQLT) are compositionally biased toward polar residues. Residues 35-69 (GLTTQIQQLTRAVRALVLDNATRRQRPAPRTRPRK) form a host transcription inhibition region. Basic residues predominate over residues 57-81 (RRQRPAPRTRPRKPKTQKPKPKKQN). The Nuclear localization signal signature appears at 62-103 (APRTRPRKPKTQKPKPKKQNQKPPQQQKKGKNQPQQPKKPKP). Residues 82 to 97 (QKPPQQQKKGKNQPQQ) are compositionally biased toward low complexity. The tract at residues 85 to 118 (PQQQKKGKNQPQQPKKPKPGKRQRTALKFEADRT) is binding to the viral RNA. A compositionally biased stretch (basic residues) spans 99-109 (KKPKPGKRQRT). The segment at 103–117 (PGKRQRTALKFEADR) is ribosome-binding. Residues 117 to 267 (RTFVGKNEDG…KTTHEDTVEW (151 aa)) form the Peptidase S3 domain. H144 acts as the Charge relay system in catalysis. The short motif at 149-159 (IDHPALAKLKF) is the Nuclear export signal element. An interaction with spike glycoprotein E2 region spans residues 160-165 (TKSSSY). Catalysis depends on D166, which acts as the Charge relay system. Residues 188 to 198 (PEVFYNWHHGA) form a dimerization of the capsid protein region. The Charge relay system role is filled by S218. The tract at residues 224–228 (DNSGK) is dimerization of the capsid protein. The interaction with spike glycoprotein E2 stretch occupies residues 252–256 (KKGAA). The tract at residues 268–280 (SRAITAMCILQNV) is functions as an uncleaved signal peptide for the precursor of protein E3/E2. Topologically, residues 268-696 (SRAITAMCIL…HYYHLYPFYT (429 aa)) are extracellular. N279 carries an N-linked (GlcNAc...) asparagine; by host glycan. 4 disulfides stabilise this stretch: C284–C290, C481–C595, C530–C555, and C532–C549. An N-linked (GlcNAc...) asparagine; by host glycan is attached at N525. The N-linked (GlcNAc...) asparagine; by host glycan is linked to N647. The chain crosses the membrane as a helical span at residues 697 to 717 (VTVLSGMGLAICAGLVISILC). The Cytoplasmic portion of the chain corresponds to 718 to 751 (CCKARRDCLTPYQLAPNATVPFLVTLCCCFQRTS). The interaction with the capsid protein stretch occupies residues 720 to 724 (KARRD). 3 S-palmitoyl cysteine; by host lipidation sites follow: C725, C745, and C746. The cysteines at positions 725 and 746 are disulfide-linked. Residues 752-764 (ADEFTDTMGYLWQ) are Extracellular-facing. The next 2 helical transmembrane spans lie at 765–785 (HSQTMFWIQLVIPLAAVITLV) and 786–805 (RCCSCCLPFLLVASPPNKAD). The Extracellular portion of the chain corresponds to 806 to 1218 (AYEHTITVPN…KTSWNWITAL (413 aa)). 4 disulfides stabilise this stretch: C855-C920, C868-C900, C869-C902, and C874-C884. The tract at residues 890 to 907 (VYPFLWGGAQCFCDSENS) is E1 fusion peptide loop. N-linked (GlcNAc...) asparagine; by host glycans are attached at residues N945 and N1051. 4 cysteine pairs are disulfide-bonded: C1065/C1077, C1106/C1181, C1111/C1185, and C1133/C1175. The helical transmembrane segment at 1219 to 1239 (MGGISSIAAIAAIVLVIALVF) threads the bilayer. At 1240–1244 (TAQHR) the chain is on the cytoplasmic side.

Homodimer. Homomultimer. Interacts with host karyopherin KPNA4; this interaction allows the nuclear import of the viral capsid protein. Interacts with spike glycoprotein E2. Interacts with host IRAK1; the interaction leads to inhibition of IRAK1-dependent signaling. In terms of assembly, the precursor of protein E3/E2 and E1 form a heterodimer shortly after synthesis. As to quaternary structure, the precursor of protein E3/E2 and E1 form a heterodimer shortly after synthesis. Processing of the precursor of protein E3/E2 into E2 and E3 results in a heterodimer of the spike glycoproteins E2 and E1. Spike at virion surface are constituted of a trimer of E2-E1 heterodimers. After target cell attachment and endocytosis, E1 change conformation to form homotrimers. Interacts with 6K protein. Interacts with spike glycoprotein E1. Processing of the precursor of protein E3/E2 into E2 and E3 results in a heterodimer of the spike glycoproteins E2 and E1. Spike at virion surface are constituted of a trimer of E2-E1 heterodimers. Interacts with 6K protein. In terms of assembly, oligomer. Interacts with spike glycoprotein E1. Interacts with spike glycoprotein E2. Structural polyprotein: Specific enzymatic cleavages in vivo yield mature proteins. Capsid protein is auto-cleaved during polyprotein translation, unmasking a signal peptide at the N-terminus of the precursor of E3/E2. The remaining polyprotein is then targeted to the host endoplasmic reticulum, where host signal peptidase cleaves it into pE2, 6K and E1 proteins. pE2 is further processed to mature E3 and E2 by host furin in trans-Golgi vesicle. In terms of processing, palmitoylated via thioester bonds. These palmitoylations may induce disruption of the C-terminus transmembrane. This would result in the reorientation of E2 C-terminus from lumenal to cytoplasmic side. Post-translationally, N-glycosylated. Palmitoylated via thioester bonds.

It localises to the virion. The protein resides in the host cytoplasm. It is found in the host cell membrane. Its subcellular location is the host nucleus. The protein localises to the virion membrane. It localises to the host Golgi apparatus. The protein resides in the host trans-Golgi network. It is found in the host endoplasmic reticulum. It carries out the reaction Autocatalytic release of the core protein from the N-terminus of the togavirus structural polyprotein by hydrolysis of a -Trp-|-Ser- bond.. Functionally, forms an icosahedral capsid with a T=4 symmetry composed of 240 copies of the capsid protein surrounded by a lipid membrane through which penetrate 80 spikes composed of trimers of E1-E2 heterodimers. The capsid protein binds to the viral RNA genome at a site adjacent to a ribosome binding site for viral genome translation following genome release. Possesses a protease activity that results in its autocatalytic cleavage from the nascent structural protein. Following its self-cleavage, the capsid protein transiently associates with ribosomes, and within several minutes the protein binds to viral RNA and rapidly assembles into icosahedric core particles. The resulting nucleocapsid eventually associates with the cytoplasmic domain of the spike glycoprotein E2 at the cell membrane, leading to budding and formation of mature virions. In case of infection, new virions attach to target cells and after clathrin-mediated endocytosis their membrane fuses with the host endosomal membrane. This leads to the release of the nucleocapsid into the cytoplasm, followed by an uncoating event necessary for the genomic RNA to become accessible. The uncoating might be triggered by the interaction of capsid proteins with ribosomes. Binding of ribosomes would release the genomic RNA since the same region is genomic RNA-binding and ribosome-binding. Specifically inhibits interleukin-1 receptor-associated kinase 1/IRAK1-dependent signaling during viral entry, representing a means by which the alphaviruses may evade innate immune detection and activation prior to viral gene expression. In terms of biological role, provides the signal sequence for the translocation of the precursor of protein E3/E2 to the host endoplasmic reticulum. Furin-cleaved E3 remains associated with spike glycoprotein E1 and mediates pH protection of the latter during the transport via the secretory pathway. After virion release from the host cell, the assembly protein E3 is gradually released in the extracellular space. Plays a role in viral attachment to target host cell, by binding to the cell receptor. Synthesized as a p62 precursor which is processed by furin at the cell membrane just before virion budding, giving rise to E2-E1 heterodimer. The p62-E1 heterodimer is stable, whereas E2-E1 is unstable and dissociate at low pH. p62 is processed at the last step, presumably to avoid E1 fusion activation before its final export to cell surface. E2 C-terminus contains a transitory transmembrane that would be disrupted by palmitoylation, resulting in reorientation of the C-terminal tail from lumenal to cytoplasmic side. This step is critical since E2 C-terminus is involved in budding by interacting with capsid proteins. This release of E2 C-terminus in cytoplasm occurs lately in protein export, and precludes premature assembly of particles at the endoplasmic reticulum membrane. Its function is as follows. Acts as a viroporin that participates in virus glycoprotein processing and transport to the plasma membrane, cell permeabilization and budding of viral particles. Disrupts the calcium homeostasis of the cell, probably at the endoplasmic reticulum level. This leads to cytoplasmic calcium elevation. Because of its lipophilic properties, the 6K protein is postulated to influence the selection of lipids that interact with the transmembrane domains of the glycoproteins, which, in turn, affects the deformability of the bilayer required for the extreme curvature that occurs as budding proceeds. Present in low amount in virions, about 3% compared to viral glycoproteins. Functionally, class II viral fusion protein. Fusion activity is inactive as long as E1 is bound to E2 in mature virion. After virus attachment to target cell and endocytosis, acidification of the endosome induce dissociation of E1/E2 heterodimer and concomitant trimerization of the E1 subunits. This E1 trimer is fusion active, and promotes release of viral nucleocapsid in cytoplasm after endosome and viral membrane fusion. Efficient fusion requires the presence of cholesterol and sphingolipid in the target membrane. The polypeptide is Structural polyprotein (Aedes (AURAV)).